A 252-amino-acid polypeptide reads, in one-letter code: Ribosomal RNA small subunit methyltransferase J (252 aa).

Residues 101–102 (RD), 117–118 (ER), 153–154 (SS), and Asp-171 each bind S-adenosyl-L-methionine.

It belongs to the methyltransferase superfamily. RsmJ family.

The protein resides in the cytoplasm. It carries out the reaction guanosine(1516) in 16S rRNA + S-adenosyl-L-methionine = N(2)-methylguanosine(1516) in 16S rRNA + S-adenosyl-L-homocysteine + H(+). Functionally, specifically methylates the guanosine in position 1516 of 16S rRNA. The protein is Ribosomal RNA small subunit methyltransferase J of Salmonella typhi.